Consider the following 35-residue polypeptide: Protein YbgU (35 aa).

The polypeptide is Protein YbgU (Escherichia coli (strain K12)).